The following is an 859-amino-acid chain: ATP-dependent RNA helicase DDX24 (859 aa).

K17 is subject to N6-acetyllysine. At S60 the chain carries Phosphoserine. Residues 61-170 (PAKNPSSLFS…KGLEPSQSTA (110 aa)) are disordered. Position 71 is an N6-acetyllysine (K71). Phosphoserine is present on residues S82 and S94. Over residues 94–105 (SPKKKIKLKKSK) the composition is skewed to basic residues. Residues 106–115 (NVATEGTSTQ) are compositionally biased toward polar residues. Residues 125–139 (LEAQGDDMVCDDPEA) show a composition bias toward acidic residues. The Q motif signature appears at 192–220 (SAWKDLFVPRPVLRALSFLGFSAPTPIQA). The Helicase ATP-binding domain occupies 224-528 (APAIRDKLDI…RILHKKHTKK (305 aa)). 237-244 (AETGSGKT) contributes to the ATP binding site. Residues 262–300 (NAAPPPSNTEAPPGETRTEAGAETRSPGKAEAESDALPD) are disordered. A compositionally biased stretch (basic and acidic residues) spans 277–293 (TRTEAGAETRSPGKAEA). Residues S287 and S295 each carry the phosphoserine modification. A Phosphothreonine modification is found at T302. Positions 326-376 (SDQALLFGDDDAGEGPSSLIREKPVPKQNENEEENLDKEQTGNLKQELDDK) are disordered. Residue K370 forms a Glycyl lysine isopeptide (Lys-Gly) (interchain with G-Cter in SUMO2) linkage. The short motif at 471 to 474 (DEAD) is the DEAD box element. A Helicase C-terminal domain is found at 578–723 (YLYYFLMQYP…LFPVQTKYMD (146 aa)). Residues K624, K808, and K825 each participate in a glycyl lysine isopeptide (Lys-Gly) (interchain with G-Cter in SUMO2) cross-link. 2 stretches are compositionally biased toward polar residues: residues 799–814 (PLFTESQKTKYPTQSG) and 823–833 (PSKSESALSCL). The interval 799 to 859 (PLFTESQKTK…EQPQPSTSAN (61 aa)) is disordered.

The protein belongs to the DEAD box helicase family. DDX24/MAK5 subfamily. As to quaternary structure, interacts with FADD. Interacts with RIPK1; this interaction disrupts RLR signaling activation of IFN-dependent transcription factor IRF7. Interacts with NIP7. Interacts with EP300; this interaction prevents TP53 acetylation mediated by EP300. In terms of assembly, (Microbial infection) Interacts with HIV-1 virus Gag and Rev proteins. In terms of processing, ubiquitinated by MDM2 without targeting DDX24 for proteasomal degradation. Instead, polyubiquitinated DDX24 promotes interaction with NIP7, a component of pre-rRNP processing complex, and associates with pre-rRNA molecules and pre-ribosomal particles. In terms of tissue distribution, ubiquitous. Most abundant in heart and brain, but with lowest levels in thymus and small intestine.

It is found in the cytoplasm. The protein localises to the nucleus. It carries out the reaction ATP + H2O = ADP + phosphate + H(+). In terms of biological role, ATP-dependent RNA helicase that plays a role in various aspects of RNA metabolism including pre-mRNA splicing and is thereby involved in different biological processes such as cell cycle regulation or innate immunity. Plays an inhibitory role in TP53 transcriptional activity and subsequently in TP53 controlled cell growth arrest and senescence by inhibiting its EP300 mediated acetylation. Negatively regulates cytosolic RNA-mediated innate immune signaling at least in part by affecting RIPK1/IRF7 interactions. Alternatively, possesses antiviral activity by recognizing gammaherpesvirus transcripts in the context of lytic reactivation. Plays an essential role in cell cycle regulation in vascular smooth muscle cells by interacting with and regulating FANCA (Fanconi anemia complementation group A) mRNA. (Microbial infection) Plays a positive role in HIV-1 infection by promoting Rev-dependent nuclear export of viral RNAs and their packaging into virus particles. This Homo sapiens (Human) protein is ATP-dependent RNA helicase DDX24 (DDX24).